The following is a 212-amino-acid chain: Outer-membrane lipoprotein LolB (212 aa).

The first 16 residues, 1 to 16, serve as a signal peptide directing secretion; it reads MACRSWVLGILLVLVG. Residue Cys17 is the site of N-palmitoyl cysteine attachment. Cys17 carries the S-diacylglycerol cysteine lipid modification.

Belongs to the LolB family. Monomer.

The protein resides in the cell outer membrane. Functionally, plays a critical role in the incorporation of lipoproteins in the outer membrane after they are released by the LolA protein. The chain is Outer-membrane lipoprotein LolB from Nitrosomonas europaea (strain ATCC 19718 / CIP 103999 / KCTC 2705 / NBRC 14298).